The primary structure comprises 247 residues: Uridylate kinase (247 aa).

17–20 lines the ATP pocket; the sequence is KFSG. Position 59 (Gly59) interacts with UMP. Gly60 and Arg64 together coordinate ATP. Residues Asp79 and 140-147 each bind UMP; that span reads TGNPFFTT. 3 residues coordinate ATP: Thr167, Tyr173, and Asp176.

Belongs to the UMP kinase family. Homohexamer.

It localises to the cytoplasm. It catalyses the reaction UMP + ATP = UDP + ADP. It participates in pyrimidine metabolism; CTP biosynthesis via de novo pathway; UDP from UMP (UMPK route): step 1/1. Inhibited by UTP. Its function is as follows. Catalyzes the reversible phosphorylation of UMP to UDP. This Legionella pneumophila subsp. pneumophila (strain Philadelphia 1 / ATCC 33152 / DSM 7513) protein is Uridylate kinase.